The chain runs to 379 residues: Homoserine O-acetyltransferase (379 aa).

In terms of domain architecture, AB hydrolase-1 spans asparagine 52–glutamate 356. The Nucleophile role is filled by serine 157. Arginine 227 contacts substrate. Catalysis depends on residues aspartate 320 and histidine 350. Residue aspartate 351 participates in substrate binding.

It belongs to the AB hydrolase superfamily. MetX family. As to quaternary structure, homodimer.

It localises to the cytoplasm. The enzyme catalyses L-homoserine + acetyl-CoA = O-acetyl-L-homoserine + CoA. It participates in amino-acid biosynthesis; L-methionine biosynthesis via de novo pathway; O-acetyl-L-homoserine from L-homoserine: step 1/1. Its function is as follows. Transfers an acetyl group from acetyl-CoA to L-homoserine, forming acetyl-L-homoserine. This chain is Homoserine O-acetyltransferase, found in Mycobacterium ulcerans (strain Agy99).